The sequence spans 596 residues: Zinc finger CCCH domain-containing protein 64 (596 aa).

Disordered regions lie at residues 243–263 and 272–291; these read LSPT…PPKT and DGAA…SQYW. C3H1-type zinc fingers lie at residues 303–331 and 335–363; these read SQGE…HNAE and QCRR…HEFQ.

The polypeptide is Zinc finger CCCH domain-containing protein 64 (Arabidopsis thaliana (Mouse-ear cress)).